A 230-amino-acid polypeptide reads, in one-letter code: Probable septum site-determining protein MinC (230 aa).

This sequence belongs to the MinC family. Interacts with MinD and FtsZ.

In terms of biological role, cell division inhibitor that blocks the formation of polar Z ring septums. Rapidly oscillates between the poles of the cell to destabilize FtsZ filaments that have formed before they mature into polar Z rings. Prevents FtsZ polymerization. This is Probable septum site-determining protein MinC from Rhodopseudomonas palustris (strain BisA53).